Here is a 332-residue protein sequence, read N- to C-terminus: L-lactate dehydrogenase A chain (332 aa).

Residue Ala2 is modified to N-acetylalanine. Lys5 carries the N6-acetyllysine; alternate modification. Lys5 is subject to N6-succinyllysine; alternate. The residue at position 14 (Lys14) is an N6-acetyllysine. 29–57 (GAVGMACAISILMKDLADELALVDVIEDK) contributes to the NAD(+) binding site. Lys57 is modified (N6-acetyllysine; alternate). Lys57 is covalently cross-linked (Glycyl lysine isopeptide (Lys-Gly) (interchain with G-Cter in SUMO2); alternate). Lys81 carries the post-translational modification N6-acetyllysine. NAD(+) is bound at residue Arg99. Arg106 is a substrate binding site. Lys118 carries the N6-acetyllysine; alternate modification. N6-succinyllysine; alternate is present on Lys118. Lys126 carries the N6-acetyllysine modification. An NAD(+)-binding site is contributed by Asn138. Residues Asn138 and Arg169 each contribute to the substrate site. The active-site Proton acceptor is the His193. A Phosphoserine modification is found at Ser213. N6-acetyllysine occurs at positions 224 and 232. Position 239 is a phosphotyrosine (Tyr239). N6-acetyllysine is present on Lys243. Residue Thr248 coordinates substrate. At Thr309 the chain carries Phosphothreonine. N6-acetyllysine; alternate is present on Lys318. At Lys318 the chain carries N6-succinyllysine; alternate. Thr322 carries the phosphothreonine modification.

This sequence belongs to the LDH/MDH superfamily. LDH family. As to quaternary structure, homotetramer. Interacts with PTEN upstream reading frame protein MP31. ISGylated.

It localises to the cytoplasm. It catalyses the reaction (S)-lactate + NAD(+) = pyruvate + NADH + H(+). It functions in the pathway fermentation; pyruvate fermentation to lactate; (S)-lactate from pyruvate: step 1/1. In terms of biological role, interconverts simultaneously and stereospecifically pyruvate and lactate with concomitant interconversion of NADH and NAD(+). This is L-lactate dehydrogenase A chain (Ldha) from Rattus norvegicus (Rat).